A 424-amino-acid chain; its full sequence is 3-phosphoshikimate 1-carboxyvinyltransferase (424 aa).

3-phosphoshikimate is bound by residues Lys21, Ser22, and Arg26. Residue Lys21 participates in phosphoenolpyruvate binding. Phosphoenolpyruvate-binding residues include Gly91 and Arg119. 3-phosphoshikimate is bound by residues Ser164, Gln166, Asp310, and Lys337. Gln166 contacts phosphoenolpyruvate. The Proton acceptor role is filled by Asp310. Residues Arg341 and Arg382 each contribute to the phosphoenolpyruvate site.

This sequence belongs to the EPSP synthase family. As to quaternary structure, monomer.

The protein localises to the cytoplasm. It carries out the reaction 3-phosphoshikimate + phosphoenolpyruvate = 5-O-(1-carboxyvinyl)-3-phosphoshikimate + phosphate. Its pathway is metabolic intermediate biosynthesis; chorismate biosynthesis; chorismate from D-erythrose 4-phosphate and phosphoenolpyruvate: step 6/7. Catalyzes the transfer of the enolpyruvyl moiety of phosphoenolpyruvate (PEP) to the 5-hydroxyl of shikimate-3-phosphate (S3P) to produce enolpyruvyl shikimate-3-phosphate and inorganic phosphate. This is 3-phosphoshikimate 1-carboxyvinyltransferase from Campylobacter curvus (strain 525.92).